A 283-amino-acid polypeptide reads, in one-letter code: Large ribosomal subunit protein uL2 (283 aa).

2 disordered regions span residues 34–53 and 224–283; these read TEPYKKKGGRNNYGRITARH and AMNP…KKKK. Positions 232–245 are enriched in gly residues; that stretch reads NGGGQGKSKGGGGW. The span at 256–268 shows a compositional bias: basic residues; that stretch reads AKGKKTRHKRKNS.

This sequence belongs to the universal ribosomal protein uL2 family. As to quaternary structure, part of the 50S ribosomal subunit. Forms a bridge to the 30S subunit in the 70S ribosome.

Functionally, one of the primary rRNA binding proteins. Required for association of the 30S and 50S subunits to form the 70S ribosome, for tRNA binding and peptide bond formation. It has been suggested to have peptidyltransferase activity; this is somewhat controversial. Makes several contacts with the 16S rRNA in the 70S ribosome. The polypeptide is Large ribosomal subunit protein uL2 (Methylacidiphilum infernorum (isolate V4) (Methylokorus infernorum (strain V4))).